We begin with the raw amino-acid sequence, 244 residues long: Cell division protein ZapD (244 aa).

The protein belongs to the ZapD family. In terms of assembly, interacts with FtsZ.

Its subcellular location is the cytoplasm. Cell division factor that enhances FtsZ-ring assembly. Directly interacts with FtsZ and promotes bundling of FtsZ protofilaments, with a reduction in FtsZ GTPase activity. This is Cell division protein ZapD from Shewanella baltica (strain OS223).